The primary structure comprises 326 residues: Probable oxidoreductase patJ (326 aa).

Residues 287 to 326 (HGVQPGSVNGSNGHSTGVESKLEQLGSRAQRRVVIDDAGK) form a disordered region. Residues 292 to 304 (GSVNGSNGHSTGV) are compositionally biased toward polar residues.

It belongs to the oxidoreductase OpS7 family.

It localises to the vacuole lumen. It is found in the cytoplasmic vesicle lumen. It functions in the pathway mycotoxin biosynthesis; patulin biosynthesis. Probable oxidoreductase; part of the gene cluster that mediates the biosynthesis of patulin, an acetate-derived tetraketide mycotoxin produced by several fungal species that shows antimicrobial properties against several bacteria. PatJ acts with patO in the vacuole to convert gentisyl alcohol to isoepoxydon. The pathway begins with the synthesis of 6-methylsalicylic acid by the polyketide synthase (PKS) patK via condensation of acetate and malonate units. The 6-methylsalicylic acid decarboxylase patG then catalyzes the decarboxylation of 6-methylsalicylic acid to yield m-cresol (also known as 3-methylphenol). These first reactions occur in the cytosol. The intermediate m-cresol is then transported into the endoplasmic reticulum where the cytochrome P450 monooxygenase patH converts it to m-hydroxybenzyl alcohol, which is further converted to gentisyl alcohol by the cytochrome P450 monooxygenase patI. The oxidoreductases patJ and patO further convert gentisyl alcohol to isoepoxydon in the vacuole. PatN catalyzes then the transformation of isoepoxydon into phyllostine. The cluster protein patF is responsible for the conversion from phyllostine to neopatulin whereas the alcohol dehydrogenase patD converts neopatulin to E-ascladiol. The steps between isoepoxydon and E-ascladiol occur in the cytosol, and E-ascladiol is probably secreted to the extracellular space by one of the cluster-specific transporters patC or patM. Finally, the secreted patulin synthase patE catalyzes the conversion of E-ascladiol to patulin. This is Probable oxidoreductase patJ from Penicillium expansum (Blue mold rot fungus).